We begin with the raw amino-acid sequence, 259 residues long: Global transcriptional regulator CodY (259 aa).

A GAF domain region spans residues methionine 1 to leucine 155. The H-T-H motif DNA-binding region spans alanine 203–arginine 222. Serine 215 carries the phosphoserine modification.

This sequence belongs to the CodY family.

The protein localises to the cytoplasm. Functionally, DNA-binding global transcriptional regulator which is involved in the adaptive response to starvation and acts by directly or indirectly controlling the expression of numerous genes in response to nutrient availability. During rapid exponential growth, CodY is highly active and represses genes whose products allow adaptation to nutrient depletion. The sequence is that of Global transcriptional regulator CodY from Bacillus mycoides (strain KBAB4) (Bacillus weihenstephanensis).